The primary structure comprises 347 residues: Cell shape-determining protein MreB (347 aa).

ATP contacts are provided by residues 19–21 (TAN), 165–167 (GGT), 213–216 (ERIK), and 295–298 (GGAL).

The protein belongs to the FtsA/MreB family. In terms of assembly, forms polymers in the presence of ATP. Forms pairs of protofilaments that adopt an antiparallel arrangement and bind to lipids.

The protein resides in the cytoplasm. Its function is as follows. Forms membrane-associated dynamic filaments that are essential for cell shape determination. Acts by regulating cell wall synthesis and cell elongation, and thus cell shape. A feedback loop between cell geometry and MreB localization may maintain elongated cell shape by targeting cell wall growth to regions of negative cell wall curvature. Required for mid-cell peptidoglycan synthesis and cell division. Directs the localization of the cytosolic peptidoglycan precursor-synthesizing enzyme MurG. Also required for proper chromosome segregation. Directs the segregation of origin-proximal but not origin-distal loci. This Caulobacter vibrioides (strain NA1000 / CB15N) (Caulobacter crescentus) protein is Cell shape-determining protein MreB.